The following is a 392-amino-acid chain: NADH-quinone oxidoreductase subunit D (392 aa).

This sequence belongs to the complex I 49 kDa subunit family. NDH-1 is composed of 14 different subunits. Subunits NuoB, C, D, E, F, and G constitute the peripheral sector of the complex.

It localises to the cell inner membrane. The catalysed reaction is a quinone + NADH + 5 H(+)(in) = a quinol + NAD(+) + 4 H(+)(out). Its function is as follows. NDH-1 shuttles electrons from NADH, via FMN and iron-sulfur (Fe-S) centers, to quinones in the respiratory chain. The immediate electron acceptor for the enzyme in this species is believed to be ubiquinone. Couples the redox reaction to proton translocation (for every two electrons transferred, four hydrogen ions are translocated across the cytoplasmic membrane), and thus conserves the redox energy in a proton gradient. The chain is NADH-quinone oxidoreductase subunit D from Rhodospirillum rubrum (strain ATCC 11170 / ATH 1.1.1 / DSM 467 / LMG 4362 / NCIMB 8255 / S1).